A 372-amino-acid chain; its full sequence is Chorismate synthase (372 aa).

NADP(+) contacts are provided by Arg48 and Arg54. FMN contacts are provided by residues 125–127 (RSS), 238–239 (NA), Gly278, 293–297 (KPTSS), and Arg319.

The protein belongs to the chorismate synthase family. Homotetramer. The cofactor is FMNH2.

The catalysed reaction is 5-O-(1-carboxyvinyl)-3-phosphoshikimate = chorismate + phosphate. The protein operates within metabolic intermediate biosynthesis; chorismate biosynthesis; chorismate from D-erythrose 4-phosphate and phosphoenolpyruvate: step 7/7. Functionally, catalyzes the anti-1,4-elimination of the C-3 phosphate and the C-6 proR hydrogen from 5-enolpyruvylshikimate-3-phosphate (EPSP) to yield chorismate, which is the branch point compound that serves as the starting substrate for the three terminal pathways of aromatic amino acid biosynthesis. This reaction introduces a second double bond into the aromatic ring system. The sequence is that of Chorismate synthase from Xylella fastidiosa (strain M23).